The chain runs to 337 residues: Dehydrogenase FUB6 (337 aa).

This sequence belongs to the zinc-containing alcohol dehydrogenase family. Quinone oxidoreductase subfamily.

Its pathway is mycotoxin biosynthesis. Its function is as follows. Dehydrogenase; part of the gene cluster that mediates the biosynthesis of fusaric acid, a mycotoxin with low to moderate toxicity to animals and humans, but with high phytotoxic properties. L-aspartate is suggested as fusaric acid amino acid precursor that is activated and further processed to O-acetyl-L-homoserine by cluster enzymes aspartate kinase FUB3 and homoserine O-acetyltransferase FUB5, as well as enzymes of the primary metabolism. The polyketide synthase (PKS) FUB1 generates the triketide trans-2-hexenal which is presumptively released by the hydrolase FUB4 and linked to the NRPS-bound amino acid precursor by NAD(P)-dependent dehydrogenase FUB6. FUB1, FUB4, and the non-canonical NRPS Fub8 may form an enzyme complex. Further processing of the NRPS-bound intermediate might be carried out by FUB6 and the O-acetylhomoserine FUB7, enabling a spontaneous electrocyclization to close the carbon backbone of fusaric acid. Dihydrofusaric acid is likely to be released via reduction by the thioester reductase (TR) domain of FUB8 whereupon the final oxidation to fusaric acid may (also) be performed by the FMN-dependent dehydrogenase FUB9. This chain is Dehydrogenase FUB6, found in Gibberella fujikuroi (strain CBS 195.34 / IMI 58289 / NRRL A-6831) (Bakanae and foot rot disease fungus).